The sequence spans 82 residues: Large ribosomal subunit protein uL23 (82 aa).

This sequence belongs to the universal ribosomal protein uL23 family. Part of the 50S ribosomal subunit. Contacts protein L29.

Binds to 23S rRNA. One of the proteins that surrounds the polypeptide exit tunnel on the outside of the ribosome. The sequence is that of Large ribosomal subunit protein uL23 from Picrophilus torridus (strain ATCC 700027 / DSM 9790 / JCM 10055 / NBRC 100828 / KAW 2/3).